The following is a 112-amino-acid chain: Large ribosomal subunit protein eL30 (112 aa).

Belongs to the eukaryotic ribosomal protein eL30 family.

The chain is Large ribosomal subunit protein eL30 (RPL30) from Zea mays (Maize).